The chain runs to 62 residues: Protein DsrB (62 aa).

This sequence belongs to the DsrB family.

The chain is Protein DsrB from Shigella flexneri serotype 5b (strain 8401).